The chain runs to 913 residues: Valine--tRNA ligase (913 aa).

The 'HIGH' region signature appears at 48–58 (PNVTGSLHMGH). The 'KMSKS' region motif lies at 541–545 (KMSKS). Residue Lys544 coordinates ATP. Residues 839–907 (VVDLEALVSK…IEHRLQSLGV (69 aa)) adopt a coiled-coil conformation.

This sequence belongs to the class-I aminoacyl-tRNA synthetase family. ValS type 1 subfamily. As to quaternary structure, monomer.

The protein localises to the cytoplasm. The enzyme catalyses tRNA(Val) + L-valine + ATP = L-valyl-tRNA(Val) + AMP + diphosphate. Functionally, catalyzes the attachment of valine to tRNA(Val). As ValRS can inadvertently accommodate and process structurally similar amino acids such as threonine, to avoid such errors, it has a 'posttransfer' editing activity that hydrolyzes mischarged Thr-tRNA(Val) in a tRNA-dependent manner. The protein is Valine--tRNA ligase of Thermosynechococcus vestitus (strain NIES-2133 / IAM M-273 / BP-1).